We begin with the raw amino-acid sequence, 259 residues long: 5'-nucleotidase SurE (259 aa).

The a divalent metal cation site is built by D8, D9, S39, and N96.

This sequence belongs to the SurE nucleotidase family. The cofactor is a divalent metal cation.

The protein localises to the cytoplasm. The catalysed reaction is a ribonucleoside 5'-phosphate + H2O = a ribonucleoside + phosphate. In terms of biological role, nucleotidase that shows phosphatase activity on nucleoside 5'-monophosphates. The polypeptide is 5'-nucleotidase SurE (Pelotomaculum thermopropionicum (strain DSM 13744 / JCM 10971 / SI)).